A 338-amino-acid chain; its full sequence is MRYIEFDEKRKFDIVPVGRVAIDFNPTDIHKPLSESRNFNKYLGGSPANIAVGLARLGKKVGFIGKVSDDRFGEFVVNYFKKEGIDVSEISKAKNGESLGLTFTEILSPTESSILMYRNGIADLQLDVDDIDEDYIKNTKAIVISGTALAMSPSREAALKALRLAKKNGTVVIFDVDYREYNWKNKDEIAIYYSIVGKESDIIMGSREEFDLMEGLIAKDSTDEETAKRWLDYGNKIVVIKHGKDGSTAYTRDGKAYRIKPFPVKLLKSFGGGDAYASAFIYGILEGWDMMDALEFGSASAAMLVASHSCSEDMPTVEAIKEFIKKEKEEYGEMVARS.

It belongs to the carbohydrate kinase PfkB family.

It carries out the reaction 5-dehydro-2-deoxy-D-gluconate + ATP = 6-phospho-5-dehydro-2-deoxy-D-gluconate + ADP + H(+). The protein operates within polyol metabolism; myo-inositol degradation into acetyl-CoA; acetyl-CoA from myo-inositol: step 5/7. Catalyzes the phosphorylation of 5-dehydro-2-deoxy-D-gluconate (2-deoxy-5-keto-D-gluconate or DKG) to 6-phospho-5-dehydro-2-deoxy-D-gluconate (DKGP). This Clostridium perfringens (strain ATCC 13124 / DSM 756 / JCM 1290 / NCIMB 6125 / NCTC 8237 / Type A) protein is 5-dehydro-2-deoxygluconokinase.